A 356-amino-acid polypeptide reads, in one-letter code: UDP-N-acetylglucosamine--N-acetylmuramyl-(pentapeptide) pyrophosphoryl-undecaprenol N-acetylglucosamine transferase (356 aa).

Residues Thr12–Gly14, Asn124, Arg163, Ser188, Ile242, Ala261–Glu266, and Gln287 contribute to the UDP-N-acetyl-alpha-D-glucosamine site.

It belongs to the glycosyltransferase 28 family. MurG subfamily.

Its subcellular location is the cell inner membrane. It catalyses the reaction di-trans,octa-cis-undecaprenyl diphospho-N-acetyl-alpha-D-muramoyl-L-alanyl-D-glutamyl-meso-2,6-diaminopimeloyl-D-alanyl-D-alanine + UDP-N-acetyl-alpha-D-glucosamine = di-trans,octa-cis-undecaprenyl diphospho-[N-acetyl-alpha-D-glucosaminyl-(1-&gt;4)]-N-acetyl-alpha-D-muramoyl-L-alanyl-D-glutamyl-meso-2,6-diaminopimeloyl-D-alanyl-D-alanine + UDP + H(+). It functions in the pathway cell wall biogenesis; peptidoglycan biosynthesis. Cell wall formation. Catalyzes the transfer of a GlcNAc subunit on undecaprenyl-pyrophosphoryl-MurNAc-pentapeptide (lipid intermediate I) to form undecaprenyl-pyrophosphoryl-MurNAc-(pentapeptide)GlcNAc (lipid intermediate II). This Ectopseudomonas mendocina (strain ymp) (Pseudomonas mendocina) protein is UDP-N-acetylglucosamine--N-acetylmuramyl-(pentapeptide) pyrophosphoryl-undecaprenol N-acetylglucosamine transferase.